Here is an 88-residue protein sequence, read N- to C-terminus: uncharacterized protein (88 aa).

The next 2 helical transmembrane spans lie at L27–H46 and S61–I83.

It is found in the membrane. This is an uncharacterized protein from Saccharomyces cerevisiae (strain ATCC 204508 / S288c) (Baker's yeast).